Reading from the N-terminus, the 514-residue chain is Light-independent protochlorophyllide reductase subunit B (514 aa).

Residue Asp36 participates in [4Fe-4S] cluster binding. Asp300 functions as the Proton donor in the catalytic mechanism. 435 to 436 (GM) lines the substrate pocket.

It belongs to the ChlB/BchB/BchZ family. Protochlorophyllide reductase is composed of three subunits; ChlL, ChlN and ChlB. Forms a heterotetramer of two ChlB and two ChlN subunits. [4Fe-4S] cluster is required as a cofactor.

It is found in the plastid. The protein localises to the chloroplast. It carries out the reaction chlorophyllide a + oxidized 2[4Fe-4S]-[ferredoxin] + 2 ADP + 2 phosphate = protochlorophyllide a + reduced 2[4Fe-4S]-[ferredoxin] + 2 ATP + 2 H2O. The protein operates within porphyrin-containing compound metabolism; chlorophyll biosynthesis (light-independent). Its function is as follows. Component of the dark-operative protochlorophyllide reductase (DPOR) that uses Mg-ATP and reduced ferredoxin to reduce ring D of protochlorophyllide (Pchlide) to form chlorophyllide a (Chlide). This reaction is light-independent. The NB-protein (ChlN-ChlB) is the catalytic component of the complex. The protein is Light-independent protochlorophyllide reductase subunit B of Pleurastrum terricola (Filamentous green alga).